The sequence spans 732 residues: Catalase-peroxidase (732 aa).

An N-terminal signal peptide occupies residues 1 to 15 (MSTESKCPFAGGAYA). A cross-link (tryptophyl-tyrosyl-methioninium (Trp-Tyr) (with M-245)) is located at residues 96 to 219 (WHSAGTYRIY…LGAVQMGLIY (124 aa)). Catalysis depends on histidine 97, which acts as the Proton acceptor. The tryptophyl-tyrosyl-methioninium (Tyr-Met) (with W-96) cross-link spans 219–245 (YVNPEGPNGNPDPLASARDIRETFARM). Histidine 260 is a heme b binding site.

The protein belongs to the peroxidase family. Peroxidase/catalase subfamily. As to quaternary structure, homodimer or homotetramer. Requires heme b as cofactor. In terms of processing, formation of the three residue Trp-Tyr-Met cross-link is important for the catalase, but not the peroxidase activity of the enzyme.

The catalysed reaction is H2O2 + AH2 = A + 2 H2O. It catalyses the reaction 2 H2O2 = O2 + 2 H2O. Functionally, bifunctional enzyme with both catalase and broad-spectrum peroxidase activity. The sequence is that of Catalase-peroxidase from Acidobacterium capsulatum (strain ATCC 51196 / DSM 11244 / BCRC 80197 / JCM 7670 / NBRC 15755 / NCIMB 13165 / 161).